Reading from the N-terminus, the 259-residue chain is Methionine aminopeptidase (259 aa).

Histidine 78 provides a ligand contact to substrate. 3 residues coordinate a divalent metal cation: aspartate 95, aspartate 106, and histidine 169. Histidine 176 is a binding site for substrate. A divalent metal cation is bound at residue glutamate 202. Tryptophan 220 serves as a coordination point for substrate. Glutamate 234 provides a ligand contact to a divalent metal cation.

Belongs to the peptidase M24A family. Methionine aminopeptidase type 1 subfamily. Monomer. It depends on Co(2+) as a cofactor. Zn(2+) is required as a cofactor. The cofactor is Mn(2+). Requires Fe(2+) as cofactor.

The enzyme catalyses Release of N-terminal amino acids, preferentially methionine, from peptides and arylamides.. In terms of biological role, removes the N-terminal methionine from nascent proteins. The N-terminal methionine is often cleaved when the second residue in the primary sequence is small and uncharged (Met-Ala-, Cys, Gly, Pro, Ser, Thr, or Val). Requires deformylation of the N(alpha)-formylated initiator methionine before it can be hydrolyzed. This chain is Methionine aminopeptidase, found in Rickettsia prowazekii (strain Madrid E).